The chain runs to 141 residues: Lysozyme 1 (141 aa).

A signal peptide spans 1–19; that stretch reads MKFFIVLVAALALAAPAMG. Residues 20-141 form the C-type lysozyme domain; it reads KTFTRCSLAR…GSLPSINDCF (122 aa). 4 disulfide bridges follow: cysteine 25–cysteine 140, cysteine 46–cysteine 130, cysteine 81–cysteine 97, and cysteine 93–cysteine 111. Glutamate 51 is an active-site residue. A glycan (N-linked (GlcNAc...) asparagine) is linked at asparagine 65. Aspartate 69 is an active-site residue. N-linked (GlcNAc...) asparagine glycosylation occurs at asparagine 104.

The protein belongs to the glycosyl hydrolase 22 family.

The catalysed reaction is Hydrolysis of (1-&gt;4)-beta-linkages between N-acetylmuramic acid and N-acetyl-D-glucosamine residues in a peptidoglycan and between N-acetyl-D-glucosamine residues in chitodextrins.. In terms of biological role, may not function as a self-defense protein, but as a digestive enzyme, probably in the gut of the insect body. Inactive towards Micrococcus luteus. Active toward glycol chitin. The protein is Lysozyme 1 of Musca domestica (House fly).